Here is an 893-residue protein sequence, read N- to C-terminus: TBC domain-containing protein kinase-like protein (893 aa).

A Protein kinase domain is found at 1–274 (MFPLRDTEMG…EELMHDHLFS (274 aa)). In terms of domain architecture, Rab-GAP TBC spans 466–651 (DIPPLLRGIT…HLWDTLLLGN (186 aa)). The 100-residue stretch at 790–889 (SKPKLLVVDI…IKPTGLLTVP (100 aa)) folds into the Rhodanese domain.

This sequence belongs to the protein kinase superfamily. As to quaternary structure, component of the FERRY complex.

Its subcellular location is the cytoplasm. It is found in the cytoskeleton. The protein resides in the spindle. The protein localises to the midbody. It localises to the early endosome. Its function is as follows. Component of the FERRY complex (Five-subunit Endosomal Rab5 and RNA/ribosome intermediary). The FERRY complex directly interacts with mRNAs and RAB5A, and functions as a RAB5A effector involved in the localization and the distribution of specific mRNAs most likely by mediating their endosomal transport. The complex recruits mRNAs and ribosomes to early endosomes through direct mRNA-interaction. Also involved in the modulation of mTOR signaling and expression of mTOR complex components. Involved in the control of actin-cytoskeleton organization. In Gallus gallus (Chicken), this protein is TBC domain-containing protein kinase-like protein.